The primary structure comprises 144 residues: Large ribosomal subunit protein uL11 (144 aa).

It belongs to the universal ribosomal protein uL11 family. As to quaternary structure, part of the ribosomal stalk of the 50S ribosomal subunit. Interacts with L10 and the large rRNA to form the base of the stalk. L10 forms an elongated spine to which L12 dimers bind in a sequential fashion forming a multimeric L10(L12)X complex. Post-translationally, one or more lysine residues are methylated.

Functionally, forms part of the ribosomal stalk which helps the ribosome interact with GTP-bound translation factors. The chain is Large ribosomal subunit protein uL11 from Polaromonas sp. (strain JS666 / ATCC BAA-500).